A 340-amino-acid chain; its full sequence is Small ribosomal subunit biogenesis GTPase RsgA (340 aa).

A compositionally biased stretch (basic and acidic residues) spans 20-34 (ERAERAERRARRDDT). Residues 20–42 (ERAERAERRARRDDTSLDAGDYG) are disordered. Residues 116 to 274 (RGQLKPVAAN…LIDSPGIREF (159 aa)) form the CP-type G domain. GTP is bound by residues 163 to 166 (NKTD) and 216 to 224 (GQSGVGKSS). Positions 298, 303, 305, and 311 each coordinate Zn(2+).

This sequence belongs to the TRAFAC class YlqF/YawG GTPase family. RsgA subfamily. Monomer. Associates with 30S ribosomal subunit, binds 16S rRNA. Zn(2+) is required as a cofactor.

The protein localises to the cytoplasm. Functionally, one of several proteins that assist in the late maturation steps of the functional core of the 30S ribosomal subunit. Helps release RbfA from mature subunits. May play a role in the assembly of ribosomal proteins into the subunit. Circularly permuted GTPase that catalyzes slow GTP hydrolysis, GTPase activity is stimulated by the 30S ribosomal subunit. The polypeptide is Small ribosomal subunit biogenesis GTPase RsgA (Chromohalobacter salexigens (strain ATCC BAA-138 / DSM 3043 / CIP 106854 / NCIMB 13768 / 1H11)).